The primary structure comprises 204 residues: Holliday junction branch migration complex subunit RuvA (204 aa).

Positions 1–64 (MIGRVTGILV…EDAHLLFGFS (64 aa)) are domain I. Residues 65–143 (HKQDRSLFRE…GLQQTDFFIK (79 aa)) are domain II. A flexible linker region spans residues 144 to 155 (SSHLPGIKCSKL). Residues 156-204 (DQSLQLDEAVSALIALGYKPIEAEKMVKKVLKADLTSEQLIREALKAAL) are domain III.

It belongs to the RuvA family. Homotetramer. Forms an RuvA(8)-RuvB(12)-Holliday junction (HJ) complex. HJ DNA is sandwiched between 2 RuvA tetramers; dsDNA enters through RuvA and exits via RuvB. An RuvB hexamer assembles on each DNA strand where it exits the tetramer. Each RuvB hexamer is contacted by two RuvA subunits (via domain III) on 2 adjacent RuvB subunits; this complex drives branch migration. In the full resolvosome a probable DNA-RuvA(4)-RuvB(12)-RuvC(2) complex forms which resolves the HJ.

The protein localises to the cytoplasm. Functionally, the RuvA-RuvB-RuvC complex processes Holliday junction (HJ) DNA during genetic recombination and DNA repair, while the RuvA-RuvB complex plays an important role in the rescue of blocked DNA replication forks via replication fork reversal (RFR). RuvA specifically binds to HJ cruciform DNA, conferring on it an open structure. The RuvB hexamer acts as an ATP-dependent pump, pulling dsDNA into and through the RuvAB complex. HJ branch migration allows RuvC to scan DNA until it finds its consensus sequence, where it cleaves and resolves the cruciform DNA. This Histophilus somni (strain 2336) (Haemophilus somnus) protein is Holliday junction branch migration complex subunit RuvA.